We begin with the raw amino-acid sequence, 478 residues long: Ubiquitin carboxyl-terminal hydrolase calypso (478 aa).

Residues 11–239 (GWLELESDPG…IRFNLMAVVP (229 aa)) enclose the UCH catalytic domain. Cys-97 acts as the Nucleophile in catalysis. The active-site Proton donor is the His-176. In terms of domain architecture, ULD spans 400-428 (NYDEFICTFLSMLAHQGELGDLVSQHLIT). A positively charged C-terminal tail required for binding nucleosomes region spans residues 430-478 (RKPNMGSVQNSGSRGVVRNYNKKTTTNGSSPKTPSSKRRRGRTKYRKRK). Positions 432-442 (PNMGSVQNSGS) are enriched in polar residues. Positions 432–478 (PNMGSVQNSGSRGVVRNYNKKTTTNGSSPKTPSSKRRRGRTKYRKRK) are disordered. Positions 464-478 (SSKRRRGRTKYRKRK) are enriched in basic residues.

The protein belongs to the peptidase C12 family. BAP1 subfamily. In terms of assembly, catalytic component of the polycomb repressive deubiquitinase (PR-DUB) complex, at least composed of caly/calypso, Asx and sba (MBD5/6 homolog). The PR-DUB complex associates with nucleosomes to mediate deubiquitination of histone H2AK118ub1 substrates; the association requires the positively charged C-terminal tail of caly, probably due to direct binding of DNA. Interacts (via ULD domain) with Asx (via DEUBAD domain); the interaction produces a stable heterodimer with a composite binding site for ubiquitin. Homodimerizes (via coiled-coil hinge-region between the UCH and ULD domains) to mediate assembly of 2 copies of the caly-Asx heterodimer into a bisymmetric tetramer; dimerization enhances PR-DUB association with nucleosomes.

Its subcellular location is the nucleus. The catalysed reaction is Thiol-dependent hydrolysis of ester, thioester, amide, peptide and isopeptide bonds formed by the C-terminal Gly of ubiquitin (a 76-residue protein attached to proteins as an intracellular targeting signal).. Catalytic component of the polycomb repressive deubiquitinase (PR-DUB) complex, a complex that specifically mediates deubiquitination of histone H2A monoubiquitinated at 'Lys-119' (H2AK118ub1). Mediates bisymmetric organization of the PR-DUB complex and is involved in association with nucleosomes to mediate deubiquitination. Does not deubiquitinate monoubiquitinated histone H2B. Required to maintain the transcriptionally repressive state of homeotic genes throughout development. The PR-DUB complex has weak or no activity toward 'Lys-48'- and 'Lys-63'-linked polyubiquitin chains. Polycomb group (PcG) protein. This chain is Ubiquitin carboxyl-terminal hydrolase calypso, found in Aedes aegypti (Yellowfever mosquito).